A 266-amino-acid chain; its full sequence is Interleukin-1 beta (266 aa).

Residues 1-113 constitute a propeptide that is removed on maturation; sequence MATVPEPINE…ETSSDELLCD (113 aa).

Belongs to the IL-1 family. In terms of assembly, monomer. In its precursor form, weakly interacts with full-length MEFV; the mature cytokine does not interact at all. Interacts with integrins ITGAV:ITGBV and ITGA5:ITGB1; integrin-binding is required for IL1B signaling. Interacts with cargo receptor TMED10; the interaction is direct and is required for the secretion of IL1B mature form. Interacts with HSP90AB1; the interaction facilitates cargo translocation into the ERGIC. Interacts with HSP90B1; the interaction facilitates cargo translocation into the ERGIC.

It is found in the cytoplasm. The protein resides in the cytosol. The protein localises to the secreted. Its subcellular location is the lysosome. It localises to the extracellular exosome. Its function is as follows. Potent pro-inflammatory cytokine. Initially discovered as the major endogenous pyrogen, induces prostaglandin synthesis, neutrophil influx and activation, T-cell activation and cytokine production, B-cell activation and antibody production, and fibroblast proliferation and collagen production. Promotes Th17 differentiation of T-cells. Synergizes with IL12/interleukin-12 to induce IFNG synthesis from T-helper 1 (Th1) cells. Plays a role in angiogenesis by inducing VEGF production synergistically with TNF and IL6. Involved in transduction of inflammation downstream of pyroptosis: its mature form is specifically released in the extracellular milieu by passing through the gasdermin-D (GSDMD) pore. This Ovis aries (Sheep) protein is Interleukin-1 beta (IL1B).